We begin with the raw amino-acid sequence, 117 residues long: Dolichyl-diphosphooligosaccharide--protein glycosyltransferase subunit DAD1 (117 aa).

Residues 1 to 33 are Cytoplasmic-facing; that stretch reads MAKTSSTTKDAQDLFHAIWSAYSATPTNLKIID. Residues 34–54 form a helical membrane-spanning segment; that stretch reads LYVVFAVFTALLQDVYMALVG. The Lumenal portion of the chain corresponds to 55 to 57; sequence PFP. A helical membrane pass occupies residues 58-78; that stretch reads FNSFLSGVLSCVGTAVLAVCL. Topologically, residues 79 to 96 are cytoplasmic; the sequence is RIQVNKENKEFKDLGPER. Residues 97 to 117 traverse the membrane as a helical segment; it reads AFADFVLCNLVLHLVIMNFLG.

The protein belongs to the DAD/OST2 family. As to quaternary structure, component of the oligosaccharyltransferase (OST) complex.

It localises to the endoplasmic reticulum membrane. Its pathway is protein modification; protein glycosylation. Functionally, subunit of the oligosaccharyl transferase (OST) complex that catalyzes the initial transfer of a defined glycan (Glc(3)Man(9)GlcNAc(2) in eukaryotes) from the lipid carrier dolichol-pyrophosphate to an asparagine residue within an Asn-X-Ser/Thr consensus motif in nascent polypeptide chains, the first step in protein N-glycosylation. N-glycosylation occurs cotranslationally and the complex associates with the Sec61 complex at the channel-forming translocon complex that mediates protein translocation across the endoplasmic reticulum (ER). All subunits are required for a maximal enzyme activity. This Pisum sativum (Garden pea) protein is Dolichyl-diphosphooligosaccharide--protein glycosyltransferase subunit DAD1 (DAD1).